The chain runs to 198 residues: Na(+)-translocating NADH-quinone reductase subunit E (198 aa).

6 consecutive transmembrane segments (helical) span residues 11-31 (SIFIENMALSFFLGMCTFLAV), 39-59 (FGLGVAVVVVLTIAVPVNNLV), 77-97 (FLSFITFIGVIAALVQILEMI), 110-130 (GIFLPLITVNCAIFGGVSFMV), 140-160 (VVYGFGSGIGWMLAIVALAGI), and 176-196 (LGITFITVGLMALGFMSFSGV).

It belongs to the NqrDE/RnfAE family. Composed of six subunits; NqrA, NqrB, NqrC, NqrD, NqrE and NqrF.

It localises to the cell inner membrane. It carries out the reaction a ubiquinone + n Na(+)(in) + NADH + H(+) = a ubiquinol + n Na(+)(out) + NAD(+). Its function is as follows. NQR complex catalyzes the reduction of ubiquinone-1 to ubiquinol by two successive reactions, coupled with the transport of Na(+) ions from the cytoplasm to the periplasm. NqrA to NqrE are probably involved in the second step, the conversion of ubisemiquinone to ubiquinol. The protein is Na(+)-translocating NADH-quinone reductase subunit E of Aliivibrio fischeri (strain ATCC 700601 / ES114) (Vibrio fischeri).